The primary structure comprises 144 residues: Large ribosomal subunit protein uL11 (144 aa).

Belongs to the universal ribosomal protein uL11 family. In terms of assembly, part of the ribosomal stalk of the 50S ribosomal subunit. Interacts with L10 and the large rRNA to form the base of the stalk. L10 forms an elongated spine to which L12 dimers bind in a sequential fashion forming a multimeric L10(L12)X complex. In terms of processing, one or more lysine residues are methylated.

Forms part of the ribosomal stalk which helps the ribosome interact with GTP-bound translation factors. This chain is Large ribosomal subunit protein uL11, found in Neisseria meningitidis serogroup C (strain 053442).